The primary structure comprises 121 residues: Small ribosomal subunit protein uS13 (121 aa).

The segment at 96 to 121 is disordered; sequence PVRGQNTKNNARTRKGKAVAIAGKKK. The segment covering 106-121 has biased composition (basic residues); sequence ARTRKGKAVAIAGKKK.

It belongs to the universal ribosomal protein uS13 family. As to quaternary structure, part of the 30S ribosomal subunit. Forms a loose heterodimer with protein S19. Forms two bridges to the 50S subunit in the 70S ribosome.

Located at the top of the head of the 30S subunit, it contacts several helices of the 16S rRNA. In the 70S ribosome it contacts the 23S rRNA (bridge B1a) and protein L5 of the 50S subunit (bridge B1b), connecting the 2 subunits; these bridges are implicated in subunit movement. Contacts the tRNAs in the A and P-sites. The sequence is that of Small ribosomal subunit protein uS13 from Streptococcus gordonii (strain Challis / ATCC 35105 / BCRC 15272 / CH1 / DL1 / V288).